A 704-amino-acid polypeptide reads, in one-letter code: Elongation factor G (704 aa).

Residues 10 to 290 enclose the tr-type G domain; it reads NKVRNIGIMA…AVIDYLPSPL (281 aa). GTP is bound by residues 19 to 26, 83 to 87, and 137 to 140; these read AHIDAGKT, DTPGH, and NKMD.

Belongs to the TRAFAC class translation factor GTPase superfamily. Classic translation factor GTPase family. EF-G/EF-2 subfamily.

It is found in the cytoplasm. In terms of biological role, catalyzes the GTP-dependent ribosomal translocation step during translation elongation. During this step, the ribosome changes from the pre-translocational (PRE) to the post-translocational (POST) state as the newly formed A-site-bound peptidyl-tRNA and P-site-bound deacylated tRNA move to the P and E sites, respectively. Catalyzes the coordinated movement of the two tRNA molecules, the mRNA and conformational changes in the ribosome. The protein is Elongation factor G of Clavibacter sepedonicus (Clavibacter michiganensis subsp. sepedonicus).